Here is a 661-residue protein sequence, read N- to C-terminus: Transketolase (661 aa).

H30 contributes to the substrate binding site. Residues H70 and 118–120 each bind thiamine diphosphate; that span reads GPL. The tract at residues 99–118 is disordered; that stretch reads STTPGHPEFRDTPGVEATTG. Residue D159 coordinates Mg(2+). 2 residues coordinate thiamine diphosphate: G160 and N189. Mg(2+) contacts are provided by N189 and V191. Positions 266, 357, and 384 each coordinate substrate. H266 lines the thiamine diphosphate pocket. E411 functions as the Proton donor in the catalytic mechanism. Residue F437 participates in thiamine diphosphate binding. The substrate site is built by H461, D469, and R520.

The protein belongs to the transketolase family. As to quaternary structure, homodimer. The cofactor is Mg(2+). Requires Ca(2+) as cofactor. Mn(2+) is required as a cofactor. Co(2+) serves as cofactor. It depends on thiamine diphosphate as a cofactor.

The enzyme catalyses D-sedoheptulose 7-phosphate + D-glyceraldehyde 3-phosphate = aldehydo-D-ribose 5-phosphate + D-xylulose 5-phosphate. Its function is as follows. Catalyzes the transfer of a two-carbon ketol group from a ketose donor to an aldose acceptor, via a covalent intermediate with the cofactor thiamine pyrophosphate. This Physarum polycephalum (Slime mold) protein is Transketolase (tkt).